Consider the following 101-residue polypeptide: Urease subunit beta (101 aa).

The protein belongs to the urease beta subunit family. In terms of assembly, heterotrimer of UreA (gamma), UreB (beta) and UreC (alpha) subunits. Three heterotrimers associate to form the active enzyme.

The protein localises to the cytoplasm. The enzyme catalyses urea + 2 H2O + H(+) = hydrogencarbonate + 2 NH4(+). The protein operates within nitrogen metabolism; urea degradation; CO(2) and NH(3) from urea (urease route): step 1/1. This Pseudomonas syringae pv. syringae (strain B728a) protein is Urease subunit beta.